The chain runs to 178 residues: Large ribosomal subunit protein uL6 (178 aa).

It belongs to the universal ribosomal protein uL6 family. In terms of assembly, part of the 50S ribosomal subunit.

In terms of biological role, this protein binds to the 23S rRNA, and is important in its secondary structure. It is located near the subunit interface in the base of the L7/L12 stalk, and near the tRNA binding site of the peptidyltransferase center. The sequence is that of Large ribosomal subunit protein uL6 from Thermoplasma volcanium (strain ATCC 51530 / DSM 4299 / JCM 9571 / NBRC 15438 / GSS1).